The sequence spans 237 residues: GATA zinc finger domain-containing protein 18 (237 aa).

Composition is skewed to low complexity over residues 1-28 (MAHN…KNNN) and 87-118 (NTST…PNSN). 3 disordered regions span residues 1 to 31 (MAHN…NSEY), 78 to 119 (PTNT…NSNL), and 140 to 186 (FEEG…GGCS). Acidic residues predominate over residues 140 to 151 (FEEGDDEEETSS). Positions 152–167 (DSDSSSSSSTSSSSSE) are enriched in low complexity. A GATA-type zinc finger spans residues 185 to 212 (CSICKTQETPYWRKGKDGDKTVYLCNAC).

The chain is GATA zinc finger domain-containing protein 18 (gtaR) from Dictyostelium discoideum (Social amoeba).